The following is a 316-amino-acid chain: BTB/POZ domain-containing adapter for CUL3-mediated RhoA degradation protein 2 (316 aa).

The region spanning 28–96 is the BTB domain; it reads KYVQLNVGGS…LRDDTITLPQ (69 aa). The span at 268 to 279 shows a compositional bias: polar residues; that stretch reads EATSRSRSQASP. The segment at 268–288 is disordered; sequence EATSRSRSQASPSEDEDTFEL. The residue at position 278 (Ser-278) is a Phosphoserine. At Ser-280 the chain carries Phosphoserine; by CK2.

It belongs to the BACURD family. In terms of assembly, component of the BCR(TNFAIP1) E3 ubiquitin ligase complex, at least composed of CUL3, TNFAIP1/BACURD2 and RBX1. Interacts with RHOA; with a preference for RhoA-GDP. Interacts with RHOB. Interacts with PCNA. Interacts with CSNK2B. Phosphorylation at Ser-280 by CK2 facilitates the nucleus localization and increases interaction with PCNA.

It is found in the cytoplasm. It localises to the nucleus. The protein resides in the endosome. Its pathway is protein modification; protein ubiquitination. Its function is as follows. Substrate-specific adapter of a BCR (BTB-CUL3-RBX1) E3 ubiquitin-protein ligase complex involved in regulation of cytoskeleton structure. The BCR(TNFAIP1) E3 ubiquitin ligase complex mediates the ubiquitination of RHOA, leading to its degradation by the proteasome, thereby regulating the actin cytoskeleton and cell migration. Its interaction with RHOB may regulate apoptosis. May enhance the PCNA-dependent DNA polymerase delta activity. This chain is BTB/POZ domain-containing adapter for CUL3-mediated RhoA degradation protein 2 (Tnfaip1), found in Mus musculus (Mouse).